We begin with the raw amino-acid sequence, 229 residues long: NADH dehydrogenase [ubiquinone] iron-sulfur protein 8, mitochondrial (229 aa).

The N-terminal 41 residues, 1–41 (MAAILARKSLSALRSRQLVLAGHTIEGTNGYNRTLLGTRSF), are a transit peptide targeting the mitochondrion. 4Fe-4S ferredoxin-type domains lie at 121 to 150 (RRYA…IEAE) and 160 to 189 (TRYD…EGPN). Residues cysteine 130, cysteine 133, cysteine 136, cysteine 140, cysteine 169, cysteine 172, cysteine 175, and cysteine 179 each contribute to the [4Fe-4S] cluster site.

It belongs to the complex I 23 kDa subunit family. As to quaternary structure, complex I is composed of about 45 different subunits. This is a component of the iron-sulfur (IP) fragment of the enzyme. [4Fe-4S] cluster serves as cofactor. As to expression, lowest expression found in storage tissues of tubers. Higher expression in older leaves than younger ones. Highest expression found in flowers.

Its subcellular location is the mitochondrion inner membrane. The enzyme catalyses a ubiquinone + NADH + 5 H(+)(in) = a ubiquinol + NAD(+) + 4 H(+)(out). Core subunit of the mitochondrial membrane respiratory chain NADH dehydrogenase (Complex I) that is believed to belong to the minimal assembly required for catalysis. Complex I functions in the transfer of electrons from NADH to the respiratory chain. The immediate electron acceptor for the enzyme is believed to be ubiquinone. May donate electrons to ubiquinone. The chain is NADH dehydrogenase [ubiquinone] iron-sulfur protein 8, mitochondrial from Solanum tuberosum (Potato).